The following is a 283-amino-acid chain: Large ribosomal subunit protein uL2c (283 aa).

Residues 229–274 form a disordered region; sequence GVVMNPIDHPHGGGEGKVPIGRKKPLTPWGHPALGRKSRKRRKYSD. Positions 262–271 are enriched in basic residues; that stretch reads LGRKSRKRRK.

This sequence belongs to the universal ribosomal protein uL2 family. In terms of assembly, part of the 50S ribosomal subunit.

The protein resides in the plastid. In Aneura mirabilis (Parasitic liverwort), this protein is Large ribosomal subunit protein uL2c (rpl2).